The following is a 398-amino-acid chain: Cholinephosphotransferase 1 (398 aa).

Residue Ala2 is modified to N-acetylalanine. Residues 2–62 lie on the Cytoplasmic side of the membrane; the sequence is AAGAGARPAP…LLQWIPLWIA (61 aa). The chain crosses the membrane as a helical span at residues 63–83; the sequence is PNTITLFGLAINLFTTLVLIF. Asn64 contacts CDP-choline. At 84–93 the chain is on the lumenal side; that stretch reads YCPTVTEEAP. A helical membrane pass occupies residues 94 to 118; sequence YWTYLLCALGLFIYQSLDAIDGKQA. 2 residues coordinate Mg(2+): Asp111 and Asp114. CDP-choline is bound at residue Arg119. The Cytoplasmic segment spans residues 119–125; that stretch reads RRTNSCS. Residues 126–150 form a helical membrane-spanning segment; the sequence is PLGELFDHGCDSLSTVFMAIGASIA. Asp132 is a Mg(2+) binding site. His133 acts as the Proton acceptor in catalysis. Residue Asp136 participates in Mg(2+) binding. Over 151–160 the chain is Lumenal; that stretch reads VRLGTHPDWL. Residues 161-179 form a helical membrane-spanning segment; it reads FFCSFVGMFMFYCAHWQTY. The Cytoplasmic portion of the chain corresponds to 180–190; that stretch reads VSGVLRFGRVD. Residues 191–207 form a helical membrane-spanning segment; it reads VTEIQVALVIVFLLSTF. The Lumenal portion of the chain corresponds to 208 to 222; that stretch reads GGAMMWDYTIPILEI. Residues 223–248 traverse the membrane as a helical segment; the sequence is KLKILPVLGVVGGLIFSCSNYFHVIL. Residues 249–265 lie on the Cytoplasmic side of the membrane; that stretch reads HGGVGKNGSTIAGTSVL. Residues 266–281 traverse the membrane as a helical segment; that stretch reads SPGLHIGLIIILAIMI. At 282–293 the chain is on the lumenal side; that stretch reads YKKSATNVFEKH. A helical membrane pass occupies residues 294-316; the sequence is PCLYTLMFGCVFAKVAQKLVIAH. The Cytoplasmic portion of the chain corresponds to 317 to 329; sequence MTKSELYLQDTVF. A helical transmembrane segment spans residues 330–339; sequence IGPGLLFLDQ. The Lumenal portion of the chain corresponds to 340–346; the sequence is YFNNFID. The chain crosses the membrane as a helical span at residues 347–376; it reads EYVVLWIAMVITSFDMMIYFSSLCLQISRH. Residues 377 to 398 lie on the Cytoplasmic side of the membrane; that stretch reads LHLSIFKTSYQQAPEQVHKHID.

This sequence belongs to the CDP-alcohol phosphatidyltransferase class-I family. The cofactor is Mg(2+). Mn(2+) serves as cofactor.

It localises to the golgi apparatus membrane. The catalysed reaction is CDP-choline + a 1,2-diacyl-sn-glycerol = a 1,2-diacyl-sn-glycero-3-phosphocholine + CMP + H(+). It catalyses the reaction 1-octadecanoyl-2-(5Z,8Z,11Z,14Z-eicosatetraenoyl)-sn-glycerol + CDP-choline = 1-octadecanoyl-2-(5Z,8Z,11Z,14Z-eicosatetraenoyl)-sn-glycero-3-phosphocholine + CMP + H(+). The enzyme catalyses 1-hexadecanoyl-2-(9Z-octadecenoyl)-sn-glycerol + CDP-choline = 1-hexadecanoyl-2-(9Z-octadecenoyl)-sn-glycero-3-phosphocholine + CMP + H(+). It carries out the reaction 1-hexadecanoyl-2-(4Z,7Z,10Z,13Z,16Z,19Z-docosahexaenoyl)-sn-glycerol + CDP-choline = 1-hexadecanoyl-2-(4Z,7Z,10Z,13Z,16Z,19Z-docosahexaenoyl)-sn-glycero-3-phosphocholine + CMP + H(+). The catalysed reaction is 1,2-dioctanoyl-sn-glycerol + CDP-choline = 1,2-dioctanoyl-sn-glycero-3-phosphocholine + CMP + H(+). It functions in the pathway phospholipid metabolism; phosphatidylcholine biosynthesis; phosphatidylcholine from phosphocholine: step 2/2. Catalyzes the final step of de novo phosphatidylcholine (PC) synthesis, i.e. the transfer of choline phosphate from CDP-choline to the free hydroxyl of a diacylglycerol (DAG), producing a PC. It thereby plays a central role in the formation and maintenance of vesicular membranes. The sequence is that of Cholinephosphotransferase 1 from Rattus norvegicus (Rat).